The sequence spans 160 residues: Large ribosomal subunit protein eL29 (160 aa).

A compositionally biased stretch (basic residues) spans 1 to 26 (MAKSKNHTTHNQSRKWHRNGIKKPRS). 2 disordered regions span residues 1–34 (MAKS…SLKG) and 115–160 (RLCQ…VKAP). Residue Lys5 is modified to N6-methyllysine. Position 31 is a phosphoserine (Ser31). Lys33 is modified (N6-acetyllysine). Positions 126–160 (KAGAKAPAKAQASAPAQAPKGAQAPKGAQAPVKAP) are enriched in low complexity. Repeat copies occupy residues 127–134 (AGAKAPAK) and 135–142 (AQASAPAQ). The tract at residues 127 to 142 (AGAKAPAKAQASAPAQ) is 2 X 8 AA tandem repeats of A-X-A-K-A-P-A-[KQ]. Ser138 is subject to Phosphoserine. The residue at position 145 (Lys145) is an N6-acetyllysine.

This sequence belongs to the eukaryotic ribosomal protein eL29 family. As to quaternary structure, component of the large ribosomal subunit.

It is found in the cytoplasm. Functionally, component of the large ribosomal subunit. The ribosome is a large ribonucleoprotein complex responsible for the synthesis of proteins in the cell. In Mus musculus (Mouse), this protein is Large ribosomal subunit protein eL29 (Rpl29).